The primary structure comprises 424 residues: Deoxyguanosinetriphosphate triphosphohydrolase-like protein (424 aa).

Residues 1-27 are disordered; that stretch reads MYPYSDADAFRRQPERAKSSQLRTSAV. Over residues 8-18 the composition is skewed to basic and acidic residues; that stretch reads DAFRRQPERAK. The 151-residue stretch at 67–217 folds into the HD domain; the sequence is RLTHSLEVAQ…MDFSDDIAYS (151 aa).

Belongs to the dGTPase family. Type 2 subfamily.

In Corynebacterium glutamicum (strain ATCC 13032 / DSM 20300 / JCM 1318 / BCRC 11384 / CCUG 27702 / LMG 3730 / NBRC 12168 / NCIMB 10025 / NRRL B-2784 / 534), this protein is Deoxyguanosinetriphosphate triphosphohydrolase-like protein (dgt).